We begin with the raw amino-acid sequence, 274 residues long: NADPH-dependent 7-cyano-7-deazaguanine reductase (274 aa).

Residue 80–82 (VES) coordinates substrate. 82–83 (SK) contributes to the NADPH binding site. Cys181 serves as the catalytic Thioimide intermediate. Residue Asp188 is the Proton donor of the active site. Residue 220 to 221 (HE) coordinates substrate. An NADPH-binding site is contributed by 249 to 250 (RG).

It belongs to the GTP cyclohydrolase I family. QueF type 2 subfamily. In terms of assembly, homodimer.

Its subcellular location is the cytoplasm. The enzyme catalyses 7-aminomethyl-7-carbaguanine + 2 NADP(+) = 7-cyano-7-deazaguanine + 2 NADPH + 3 H(+). It participates in tRNA modification; tRNA-queuosine biosynthesis. Functionally, catalyzes the NADPH-dependent reduction of 7-cyano-7-deazaguanine (preQ0) to 7-aminomethyl-7-deazaguanine (preQ1). The sequence is that of NADPH-dependent 7-cyano-7-deazaguanine reductase from Burkholderia pseudomallei (strain 1106a).